The following is a 98-amino-acid chain: NADH-ubiquinone oxidoreductase chain 4L (98 aa).

A run of 3 helical transmembrane segments spans residues 1–21 (MIPT…GMLT), 29–49 (SLLC…LIAL), and 61–81 (IILL…LVSI).

This sequence belongs to the complex I subunit 4L family. Core subunit of respiratory chain NADH dehydrogenase (Complex I) which is composed of 45 different subunits.

Its subcellular location is the mitochondrion inner membrane. The catalysed reaction is a ubiquinone + NADH + 5 H(+)(in) = a ubiquinol + NAD(+) + 4 H(+)(out). Core subunit of the mitochondrial membrane respiratory chain NADH dehydrogenase (Complex I) which catalyzes electron transfer from NADH through the respiratory chain, using ubiquinone as an electron acceptor. Part of the enzyme membrane arm which is embedded in the lipid bilayer and involved in proton translocation. This chain is NADH-ubiquinone oxidoreductase chain 4L (MT-ND4L), found in Macaca ochreata subsp. brunnescens (Muna-buton macaque).